Reading from the N-terminus, the 258-residue chain is Heat-labile enterotoxin A chain (258 aa).

An N-terminal signal peptide occupies residues 1 to 18 (MKNITFIFFILLASPLYA). 25–39 (RADSRPPDEIKRSGG) contributes to the NAD(+) binding site. Residue Glu130 is part of the active site. Cys205 and Cys217 are joined by a disulfide.

The protein belongs to the enterotoxin A family. Heterohexamer of one A chain and of five B chains.

The biological activity of the toxin is produced by the A chain, which activates intracellular adenyl cyclase. The polypeptide is Heat-labile enterotoxin A chain (eltA) (Escherichia coli).